The sequence spans 471 residues: Alpha-galactosidase 5 (471 aa).

The N-terminal stretch at 1–18 (MFAFYFLTACTTLKGVFG) is a signal peptide. Residues Cys42 and Cys74 are joined by a disulfide bond. Substrate contacts are provided by Asp72 and Asp73. N-linked (GlcNAc...) asparagine glycosylation is present at Asn105. A disulfide bridge connects residues Cys121 and Cys151. Lys147 provides a ligand contact to substrate. Catalysis depends on Asp149, which acts as the Nucleophile. N-linked (GlcNAc...) asparagine glycosylation occurs at Asn175. Arg205 is a binding site for substrate. Catalysis depends on Asp209, which acts as the Proton donor. Disulfide bonds link Cys221-Cys237 and Cys223-Cys230. Residue Gln251 participates in substrate binding. N-linked (GlcNAc...) asparagine glycosylation is found at Asn270, Asn370, Asn403, Asn422, Asn435, and Asn454.

It belongs to the glycosyl hydrolase 27 family. In terms of assembly, homotetramer.

It is found in the secreted. The enzyme catalyses Hydrolysis of terminal, non-reducing alpha-D-galactose residues in alpha-D-galactosides, including galactose oligosaccharides, galactomannans and galactolipids.. This Saccharomyces cerevisiae (Baker's yeast) protein is Alpha-galactosidase 5 (MEL5).